A 496-amino-acid polypeptide reads, in one-letter code: Legumin (496 aa).

Residues 1–21 (MAKLLALSLSFCFLLFGTCFA) form the signal peptide. 2 disulfide bridges follow: Cys31-Cys64 and Cys107-Cys318. Residues 36–230 (LNALKPDNRI…ALNVNRRIVN (195 aa)) enclose the Cupin type-1 1 domain. The interval 240 to 311 (EKGAIVKVKG…RGGSKSQRDN (72 aa)) is disordered. Basic and acidic residues predominate over residues 257–269 (PEKEPRQKRGSRQ). In terms of domain architecture, Cupin type-1 2 spans 324–453 (QNIGSSSSPD…INVCQKKLLQ (130 aa)).

The protein belongs to the 11S seed storage protein (globulins) family. Hexamer; each subunit is composed of an acidic and a basic chain derived from a single precursor and linked by a disulfide bond.

Its function is as follows. Seed storage protein. Alpha-amylase inhibitor. The polypeptide is Legumin (Cicer arietinum (Chickpea)).